The chain runs to 157 residues: Crossover junction endodeoxyribonuclease RuvC (157 aa).

Active-site residues include D7, E66, and D139. 3 residues coordinate Mg(2+): D7, E66, and D139.

The protein belongs to the RuvC family. Homodimer which binds Holliday junction (HJ) DNA. The HJ becomes 2-fold symmetrical on binding to RuvC with unstacked arms; it has a different conformation from HJ DNA in complex with RuvA. In the full resolvosome a probable DNA-RuvA(4)-RuvB(12)-RuvC(2) complex forms which resolves the HJ. Mg(2+) is required as a cofactor.

The protein resides in the cytoplasm. It catalyses the reaction Endonucleolytic cleavage at a junction such as a reciprocal single-stranded crossover between two homologous DNA duplexes (Holliday junction).. Functionally, the RuvA-RuvB-RuvC complex processes Holliday junction (HJ) DNA during genetic recombination and DNA repair. Endonuclease that resolves HJ intermediates. Cleaves cruciform DNA by making single-stranded nicks across the HJ at symmetrical positions within the homologous arms, yielding a 5'-phosphate and a 3'-hydroxyl group; requires a central core of homology in the junction. The consensus cleavage sequence is 5'-(A/T)TT(C/G)-3'. Cleavage occurs on the 3'-side of the TT dinucleotide at the point of strand exchange. HJ branch migration catalyzed by RuvA-RuvB allows RuvC to scan DNA until it finds its consensus sequence, where it cleaves and resolves the cruciform DNA. In terms of biological role, required for efficient infection in a mouse model system. This chain is Crossover junction endodeoxyribonuclease RuvC, found in Helicobacter pylori (strain G27).